A 211-amino-acid polypeptide reads, in one-letter code: Chaperone protein TorD (211 aa).

Belongs to the TorD/DmsD family. TorD subfamily.

The protein resides in the cytoplasm. Functionally, involved in the biogenesis of TorA. Acts on TorA before the insertion of the molybdenum cofactor and, as a result, probably favors a conformation of the apoenzyme that is competent for acquiring the cofactor. The polypeptide is Chaperone protein TorD (Shewanella loihica (strain ATCC BAA-1088 / PV-4)).